Reading from the N-terminus, the 61-residue chain is Small ribosomal subunit protein uS14 (61 aa).

Residues Cys-24, Cys-27, Cys-40, and Cys-43 each contribute to the Zn(2+) site.

It belongs to the universal ribosomal protein uS14 family. Zinc-binding uS14 subfamily. In terms of assembly, part of the 30S ribosomal subunit. Contacts proteins S3 and S10. Zn(2+) is required as a cofactor.

In terms of biological role, binds 16S rRNA, required for the assembly of 30S particles and may also be responsible for determining the conformation of the 16S rRNA at the A site. The chain is Small ribosomal subunit protein uS14 from Finegoldia magna (strain ATCC 29328 / DSM 20472 / WAL 2508) (Peptostreptococcus magnus).